The following is a 522-amino-acid chain: GMP synthase [glutamine-hydrolyzing] (522 aa).

The region spanning 8–204 (RLLIIDFGSQ…FVRLAGFKGD (197 aa)) is the Glutamine amidotransferase type-1 domain. The active-site Nucleophile is Cys-86. Catalysis depends on residues His-179 and Glu-181. A GMPS ATP-PPase domain is found at 205-397 (WTMGAYREEA…LGLPASFIGR (193 aa)). 232-238 (SGGVDSS) provides a ligand contact to ATP.

Homodimer.

It catalyses the reaction XMP + L-glutamine + ATP + H2O = GMP + L-glutamate + AMP + diphosphate + 2 H(+). The protein operates within purine metabolism; GMP biosynthesis; GMP from XMP (L-Gln route): step 1/1. Catalyzes the synthesis of GMP from XMP. The protein is GMP synthase [glutamine-hydrolyzing] of Roseobacter denitrificans (strain ATCC 33942 / OCh 114) (Erythrobacter sp. (strain OCh 114)).